Consider the following 339-residue polypeptide: mRNA cap guanine-N(7) methyltransferase 2 (339 aa).

In terms of domain architecture, mRNA cap 0 methyltransferase spans methionine 1 to proline 277. S-adenosyl-L-methionine contacts are provided by residues lysine 14, aspartate 54, and aspartate 82 to proline 83. The disordered stretch occupies residues valine 314–leucine 339.

It belongs to the class I-like SAM-binding methyltransferase superfamily. mRNA cap 0 methyltransferase family.

The protein resides in the nucleus. It carries out the reaction a 5'-end (5'-triphosphoguanosine)-ribonucleoside in mRNA + S-adenosyl-L-methionine = a 5'-end (N(7)-methyl 5'-triphosphoguanosine)-ribonucleoside in mRNA + S-adenosyl-L-homocysteine. Functionally, mRNA-capping methyltransferase that methylates the N7 position of the added guanosine to the 5'-cap structure of mRNAs. Binds RNA containing 5'-terminal GpppC. The protein is mRNA cap guanine-N(7) methyltransferase 2 of Oryza sativa subsp. japonica (Rice).